The following is a 375-amino-acid chain: Superinfection exclusion protein (375 aa).

A signal peptide spans 1–15; it reads MIALLILSLACSVSA.

This sequence belongs to the serpin family. Orthopoxvirus OPG040 subfamily. As to quaternary structure, interacts with OPG185/A56 protein.

It is found in the virion membrane. The protein localises to the host cell membrane. In terms of biological role, negatively regulates superinfection and syncytium formation in infected host cells. Acts in concert with OPG185/A56 protein at the host cell membrane by interacting with and inhibiting the mature virion entry/fusion complex (EFC). This mechanism ensures that new virions released from the cell cannot enter already infected cells. This chain is Superinfection exclusion protein (OPG040), found in Cynomys gunnisoni (Gunnison's prairie dog).